Reading from the N-terminus, the 845-residue chain is Alanine--tRNA ligase (845 aa).

H552, H556, C653, and H657 together coordinate Zn(2+).

It belongs to the class-II aminoacyl-tRNA synthetase family. Requires Zn(2+) as cofactor.

It is found in the cytoplasm. The enzyme catalyses tRNA(Ala) + L-alanine + ATP = L-alanyl-tRNA(Ala) + AMP + diphosphate. Catalyzes the attachment of alanine to tRNA(Ala) in a two-step reaction: alanine is first activated by ATP to form Ala-AMP and then transferred to the acceptor end of tRNA(Ala). Also edits incorrectly charged Ser-tRNA(Ala) and Gly-tRNA(Ala) via its editing domain. This Campylobacter fetus subsp. fetus (strain 82-40) protein is Alanine--tRNA ligase.